The chain runs to 632 residues: PWWP domain-containing protein 5 (632 aa).

The PWWP domain occupies 97–158 (DSDLVWAKLR…ASQIKPFHQN (62 aa)). Positions 310–452 (RKTDYKDNAE…AERKISSPDE (143 aa)) are disordered. 4 stretches are compositionally biased toward basic and acidic residues: residues 313–326 (DYKD…EKTL), 339–364 (STEK…GKSE), 371–383 (QQKE…HSNE), and 425–449 (KSTE…KISS). The Nuclear localization signal signature appears at 352-359 (KRKVESSE).

Belongs to the PDP family. As to quaternary structure, component of the PRC2 (polycomb repressive complex 2) complex which regulates histone methylation on histone H3K27.

Its subcellular location is the nucleus. Its function is as follows. May influence gene expression by regulating the function of the PRC2 complex and modulating H3K27me3 level. The sequence is that of PWWP domain-containing protein 5 from Arabidopsis thaliana (Mouse-ear cress).